A 244-amino-acid polypeptide reads, in one-letter code: Phosphoadenosine 5'-phosphosulfate reductase (244 aa).

Cys-239 (nucleophile; cysteine thiosulfonate intermediate) is an active-site residue.

It belongs to the PAPS reductase family. CysH subfamily.

It localises to the cytoplasm. It carries out the reaction [thioredoxin]-disulfide + sulfite + adenosine 3',5'-bisphosphate + 2 H(+) = [thioredoxin]-dithiol + 3'-phosphoadenylyl sulfate. Its pathway is sulfur metabolism; hydrogen sulfide biosynthesis; sulfite from sulfate: step 3/3. In terms of biological role, catalyzes the formation of sulfite from phosphoadenosine 5'-phosphosulfate (PAPS) using thioredoxin as an electron donor. The chain is Phosphoadenosine 5'-phosphosulfate reductase from Photorhabdus laumondii subsp. laumondii (strain DSM 15139 / CIP 105565 / TT01) (Photorhabdus luminescens subsp. laumondii).